The chain runs to 238 residues: Large ribosomal subunit protein uL1 (238 aa).

This sequence belongs to the universal ribosomal protein uL1 family. In terms of assembly, part of the 50S ribosomal subunit.

Binds directly to 23S rRNA. The L1 stalk is quite mobile in the ribosome, and is involved in E site tRNA release. In terms of biological role, protein L1 is also a translational repressor protein, it controls the translation of the L11 operon by binding to its mRNA. The polypeptide is Large ribosomal subunit protein uL1 (Salinispora arenicola (strain CNS-205)).